Reading from the N-terminus, the 208-residue chain is Small ribosomal subunit protein uS4 (208 aa).

The S4 RNA-binding domain maps to 98–158 (SRLDNAVYRL…EKSRNMQVID (61 aa)).

It belongs to the universal ribosomal protein uS4 family. In terms of assembly, part of the 30S ribosomal subunit. Contacts protein S5. The interaction surface between S4 and S5 is involved in control of translational fidelity.

In terms of biological role, one of the primary rRNA binding proteins, it binds directly to 16S rRNA where it nucleates assembly of the body of the 30S subunit. Functionally, with S5 and S12 plays an important role in translational accuracy. The sequence is that of Small ribosomal subunit protein uS4 from Desulfosudis oleivorans (strain DSM 6200 / JCM 39069 / Hxd3) (Desulfococcus oleovorans).